Consider the following 174-residue polypeptide: Disulfide bond formation protein B (174 aa).

The Cytoplasmic segment spans residues 1–12 (MLNWIDTAPRRI). A helical membrane pass occupies residues 13-29 (LALISAACVAMLAFGMY). Topologically, residues 30-47 (LQHVVGLEPCPMCIVQRY) are periplasmic. A disulfide bond links cysteine 39 and cysteine 42. The helical transmembrane segment at 48–64 (ALIGVAVFAGLASARGQ) threads the bilayer. Residues 65-69 (KGWWM) lie on the Cytoplasmic side of the membrane. The helical transmembrane segment at 70-87 (TWSVLALVAAGFGAFVAA) threads the bilayer. Residues 88 to 143 (RQSWLQWYPPEIATCGRDFYGMIENYPISRAIPMIFRGSGDCTAVDWTFLGGSIAN) are Periplasmic-facing. The cysteines at positions 102 and 129 are disulfide-linked. Residues 144–162 (WSFVWFLLFAVLLLVLLVR) form a helical membrane-spanning segment. Residues 163–174 (GGRGAPDTLARA) lie on the Cytoplasmic side of the membrane.

It belongs to the DsbB family.

It is found in the cell inner membrane. Its function is as follows. Required for disulfide bond formation in some periplasmic proteins. Acts by oxidizing the DsbA protein. This is Disulfide bond formation protein B from Acidovorax sp. (strain JS42).